A 339-amino-acid chain; its full sequence is Glyceraldehyde-3-phosphate dehydrogenase (339 aa).

Residues 12 to 13 (RI), aspartate 39, arginine 84, and serine 127 each bind NAD(+). Residues 157–159 (SCT), threonine 188, arginine 203, 216–217 (TG), and arginine 239 contribute to the D-glyceraldehyde 3-phosphate site. Residue cysteine 158 is the Nucleophile of the active site. An NAD(+)-binding site is contributed by asparagine 320.

Belongs to the glyceraldehyde-3-phosphate dehydrogenase family. In terms of assembly, homotetramer.

The protein localises to the cytoplasm. It carries out the reaction D-glyceraldehyde 3-phosphate + phosphate + NAD(+) = (2R)-3-phospho-glyceroyl phosphate + NADH + H(+). It functions in the pathway carbohydrate degradation; glycolysis; pyruvate from D-glyceraldehyde 3-phosphate: step 1/5. Functionally, catalyzes the oxidative phosphorylation of glyceraldehyde 3-phosphate (G3P) to 1,3-bisphosphoglycerate (BPG) using the cofactor NAD. The first reaction step involves the formation of a hemiacetal intermediate between G3P and a cysteine residue, and this hemiacetal intermediate is then oxidized to a thioester, with concomitant reduction of NAD to NADH. The reduced NADH is then exchanged with the second NAD, and the thioester is attacked by a nucleophilic inorganic phosphate to produce BPG. In Mycobacterium bovis (strain ATCC BAA-935 / AF2122/97), this protein is Glyceraldehyde-3-phosphate dehydrogenase (gap).